Here is an 84-residue protein sequence, read N- to C-terminus: Small ribosomal subunit protein uS17 (84 aa).

Belongs to the universal ribosomal protein uS17 family. As to quaternary structure, part of the 30S ribosomal subunit.

One of the primary rRNA binding proteins, it binds specifically to the 5'-end of 16S ribosomal RNA. This chain is Small ribosomal subunit protein uS17, found in Alkaliphilus metalliredigens (strain QYMF).